A 411-amino-acid polypeptide reads, in one-letter code: Receptor GIN3 (411 aa).

Residues 1–99 (MSGFVAGEEA…LLPILPHPRN (99 aa)) lie on the Extracellular side of the membrane. Residues 100–120 (IPIIVPLFCVFTVMTSLAVGL) form a helical membrane-spanning segment. At 121–134 (RLWSRQKVAGGIRS) the chain is on the cytoplasmic side. Residues 135 to 155 (FDWLALAGFGLTIIYGAVSVY) traverse the membrane as a helical segment. At 156 to 181 (HSKVSGPYQAFYDRTWDQMKENYKVY) the chain is on the extracellular side. The chain crosses the membrane as a helical span at residues 182–202 (LVLTIMYPFIMGLIKISLLLF). The Cytoplasmic portion of the chain corresponds to 203–227 (YYRVATLNYVQWAVYATGSLTIANS). A helical transmembrane segment spans residues 228–248 (IAAIITHCLAFMPIDFWNHFL). At 249–262 (QSPFKFNSRTPMLV) the chain is on the extracellular side. Residues 263-283 (FGAVYILTDVAILIIPMPMVF) traverse the membrane as a helical segment. At 284–292 (QLKLYPREK) the chain is on the cytoplasmic side. The helical transmembrane segment at 293–313 (VIAVIAFSLGGVACVASGFRI) threads the bilayer. Over 314–328 (WAIDEFQNYSGKNSS) the chain is Extracellular. 2 N-linked (GlcNAc...) asparagine glycosylation sites follow: Asn321 and Asn326. The helical transmembrane segment at 329–349 (GLMIDAWTMIELNLTLICASA) threads the bilayer. Residues 350–411 (PAIRALAIHY…QSPVIPKEVV (62 aa)) lie on the Cytoplasmic side of the membrane. Residues 371–411 (FSSSGATRGSKSAGSSGKSKTPESEKSMQVSQSPVIPKEVV) are disordered. Residues 372–389 (SSSGATRGSKSAGSSGKS) show a composition bias toward low complexity.

It belongs to the SAT4 family. Interacts with guanine nucleotide-binding protein alpha GPA2; to activate adenylate cyclase and positively regulate nematode trap formation.

The protein resides in the cell membrane. Receptor that senses nematode-derived signals at the cell surface and signals via adenylate cyclase to positively regulate trap formation for nematode capture. This Arthrobotrys oligospora (strain ATCC 24927 / CBS 115.81 / DSM 1491) (Nematode-trapping fungus) protein is Receptor GIN3.